Consider the following 149-residue polypeptide: Proline-rich acidic protein 1 (149 aa).

The first 20 residues, 1–20 (MKRFLLATCLVAALLWEAGA), serve as a signal peptide directing secretion. Disordered regions lie at residues 51–79 (EPLEKDNQLGPLLPEPKQKPAAAEEKRPD) and 97–122 (LQGPELDLDSIDHPMSDDVQDEEVPQ). Residues 66–79 (PKQKPAAAEEKRPD) show a composition bias toward basic and acidic residues.

Interacts with MTTP. Interacts with MAD1L1. Predominantly expressed in the intestinal epithelial cells than in the liver (at protein level). Abundantly expressed in the uterus during late pregnancy by uterus epithelial cells. After birth expression rapidly decreases and is no longer found in the uterus by the third day. Also highly expressed in the small intestine where it shows a proximal-distal graded expression.

The protein resides in the secreted. It is found in the endoplasmic reticulum. In terms of biological role, lipid-binding protein which promotes lipid absorption by facilitating MTTP-mediated lipid transfer (mainly triglycerides and phospholipids) and MTTP-mediated apoB lipoprotein assembly and secretion. Protects the gastrointestinal epithelium from irradiation-induced apoptosis. May play an important role in maintaining normal growth homeostasis in epithelial cells. Involved in p53/TP53-dependent cell survival after DNA damage. This chain is Proline-rich acidic protein 1 (Prap1), found in Mus musculus (Mouse).